Reading from the N-terminus, the 438-residue chain is Enolase (438 aa).

2 residues coordinate substrate: histidine 159 and glutamate 168. Glutamate 211 serves as the catalytic Proton donor. Positions 246, 297, and 322 each coordinate Mg(2+). Residues glutamate 297 and aspartate 322 each contribute to the substrate site. The Proton acceptor role is filled by lysine 347. Substrate is bound by residues 374–377 (SHRS) and lysine 398.

This sequence belongs to the enolase family. Homodimer. The cofactor is Mg(2+).

It is found in the cytoplasm. The enzyme catalyses (2R)-2-phosphoglycerate = phosphoenolpyruvate + H2O. The protein operates within carbohydrate degradation; glycolysis; pyruvate from D-glyceraldehyde 3-phosphate: step 4/5. The chain is Enolase (enoA) from Penicillium citrinum.